The chain runs to 441 residues: MANKYVSSVLKSLLVLLHLVFLSKQHVDSASIVKSLPGFEGQLPFELETGYIGVGEEEEVQLFYYFIKSERNPKEDPLILWLTGGPGCSAISGLLFENGPLTMKLDVYNGTLPSLVSTTYSWTKTSSIIFLDQPVGTGFSYSRTQQFNKPSDSGEAKRIHEFLQKWLGKHQVFSSNPFYVAGDSYSGLVVPATVQEISKGNYECCNPPINLQGYVLGNPLTDYTTGSNSRIPFAHGMALISDELYESLKKTCKGEYTNVHPRNTQCLKFVEEFNKCTNRIFQQLILDPLCETETPDCYIYRYLLTTYWANDATVREALQINKESIGEWVRCYYSIPYNNDIKSSMPYHVNNSISGYRSLIYSGDHDFEVPYLGTQAWIRSLNYSIIDDWRPWMVKNQIAGYTRTYANKMTFATIKGGGHTAESKPEEASIMFQRWINGQPL.

An N-terminal signal peptide occupies residues 1–29 (MANKYVSSVLKSLLVLLHLVFLSKQHVDS). 3 disulfides stabilise this stretch: cysteine 88–cysteine 331, cysteine 252–cysteine 266, and cysteine 290–cysteine 297. Asparagine 109 is a glycosylation site (N-linked (GlcNAc...) asparagine). Residue serine 184 is part of the active site. Asparagine 350 carries N-linked (GlcNAc...) asparagine glycosylation. Aspartate 366 is an active-site residue. Asparagine 382 is a glycosylation site (N-linked (GlcNAc...) asparagine). Histidine 419 is a catalytic residue.

Belongs to the peptidase S10 family. Expressed in seedlings and roots.

It is found in the secreted. Its function is as follows. Probable carboxypeptidase. This Arabidopsis thaliana (Mouse-ear cress) protein is Serine carboxypeptidase-like 1 (SCPL1).